A 1349-amino-acid polypeptide reads, in one-letter code: DNA-directed RNA polymerase subunit beta' (1349 aa).

The Zn(2+) site is built by cysteine 70, cysteine 72, cysteine 85, and cysteine 88. Positions 460, 462, and 464 each coordinate Mg(2+). Zn(2+) contacts are provided by cysteine 801, cysteine 875, cysteine 882, and cysteine 885.

Belongs to the RNA polymerase beta' chain family. As to quaternary structure, the RNAP catalytic core consists of 2 alpha, 1 beta, 1 beta' and 1 omega subunit. When a sigma factor is associated with the core the holoenzyme is formed, which can initiate transcription. Requires Mg(2+) as cofactor. The cofactor is Zn(2+).

It catalyses the reaction RNA(n) + a ribonucleoside 5'-triphosphate = RNA(n+1) + diphosphate. In terms of biological role, DNA-dependent RNA polymerase catalyzes the transcription of DNA into RNA using the four ribonucleoside triphosphates as substrates. The protein is DNA-directed RNA polymerase subunit beta' of Desulfotalea psychrophila (strain LSv54 / DSM 12343).